A 358-amino-acid chain; its full sequence is Gentisate 1,2-dioxygenase (358 aa).

In terms of domain architecture, Cupin type-1 spans 239–358 (QTLRQRAEND…AFNFYAEAEP (120 aa)).

This sequence belongs to the gentisate 1,2-dioxygenase family. In terms of assembly, homotetramer.

It catalyses the reaction 2,5-dihydroxybenzoate + O2 = 3-maleylpyruvate + H(+). It functions in the pathway aromatic compound metabolism; naphthalene degradation. Its activity is regulated as follows. Inhibited by 2,2'-dipyridyl. Catalyzes the oxygen-dependent ring fission of gentisate between the carboxyl and proximal hydroxyl groups at positions 1 and 2 of the aromatic ring to form maleylpyruvate. No activity with cathechol and protecatechuate as substrates. Part of a 3-hydroxybenzoic acid-degradation pathway. In Haloferax sp, this protein is Gentisate 1,2-dioxygenase (gdoA).